A 255-amino-acid chain; its full sequence is Hydroxyacylglutathione hydrolase (255 aa).

The Zn(2+) site is built by histidine 56, histidine 58, aspartate 60, histidine 61, histidine 114, aspartate 133, and histidine 171.

The protein belongs to the metallo-beta-lactamase superfamily. Glyoxalase II family. In terms of assembly, monomer. Zn(2+) is required as a cofactor.

The catalysed reaction is an S-(2-hydroxyacyl)glutathione + H2O = a 2-hydroxy carboxylate + glutathione + H(+). It participates in secondary metabolite metabolism; methylglyoxal degradation; (R)-lactate from methylglyoxal: step 2/2. Thiolesterase that catalyzes the hydrolysis of S-D-lactoyl-glutathione to form glutathione and D-lactic acid. The polypeptide is Hydroxyacylglutathione hydrolase (Rhodopseudomonas palustris (strain BisA53)).